Consider the following 778-residue polypeptide: DEK domain-containing chromatin-associated protein 4 (778 aa).

Disordered stretches follow at residues 1–334 and 475–689; these read MGEE…RPVR and LVNE…PSDE. Positions 14 to 26 are enriched in polar residues; sequence ANGTSSLQKTSDA. Composition is skewed to basic and acidic residues over residues 40-95, 121-153, 165-185, and 209-243; these read EVQE…PEAD, AVMK…KLEG, EEKL…KVEN, and TNKG…TESK. Positions 191–300 form a coiled coil; it reads KEEALKEKNE…KEDIKKSNKR (110 aa). The span at 244 to 286 shows a compositional bias: acidic residues; that stretch reads DENEDKEEEKEDEKEESMDDKEDEKEESNDDDKEDEKEESNDD. Composition is skewed to basic and acidic residues over residues 287–296 and 303–323; these read KEDKKEDIKK and GKTE…DIEP. The short motif at 289-296 is the Nuclear localization signal 1 element; sequence DKKEDIKK. A Nuclear localization signal 2 motif is present at residues 489–496; it reads PKKSSPAA. Residues 491–502 are compositionally biased toward low complexity; it reads KSSPAAGSSSSK. Positions 526 to 587 form a coiled coil; sequence DDESEEEKED…EESEEETKKK (62 aa). Acidic residues-rich tracts occupy residues 527–553 and 560–582; these read DESE…EENE and SEDE…ESEE. The Nuclear localization signal 3 signature appears at 618–625; it reads PKKATQKR. A compositionally biased stretch (basic residues) spans 621-631; it reads ATQKRSAGKRK. A compositionally biased stretch (basic and acidic residues) spans 678–689; sequence KGKDKNKEPSDE. The region spanning 685-740 is the DEK-C domain; it reads EPSDEELKTAIIDILKGVDFNTATFTDILKRLDAKFNISLASKKSSIKRMIQDELT. DNA-binding regions lie at residues 703 to 717 and 732 to 736; these read DFNT…KRLD and KRMIQ. Residues 732 to 766 are a coiled coil; it reads KRMIQDELTKLADEAEDEEGEEEDAEHEEEEEKEK. The segment at 741-778 is disordered; it reads KLADEAEDEEGEEEDAEHEEEEEKEKAKGSGGGEEVKA. Positions 745-763 are enriched in acidic residues; that stretch reads EAEDEEGEEEDAEHEEEEE. Residues 764–778 are compositionally biased toward basic and acidic residues; the sequence is KEKAKGSGGGEEVKA.

In terms of assembly, interacts with DEK3.

It is found in the nucleus. Its subcellular location is the nucleolus. Functionally, chromatin-associated protein which contributes to the modulation of chromatin structure (such as super-helical structure of DNA) and function. Binds to chromatin of protein-coding genes throughout the genome to regulate nucleosome occupancy and chromatin accessibility, and to modulate the expression of target genes. The chain is DEK domain-containing chromatin-associated protein 4 from Arabidopsis thaliana (Mouse-ear cress).